The following is a 430-amino-acid chain: MIRSIIALMLSFALVPFAFASDRLTVKHHEIDIRVAIPLVADFCGRSVVLGPSIQGVVSLDFDDVPCSQAFDLLLESNHLLSSMVGDVLVITAMDQVLNSERKADDLRTFRRDLFNANDIERRVINIVHASASEVVSLFKESFMSLDAPGMSMTVDERTNSVFAALPSSFFPALESVIQAIDVPVRQVAIEANVVEASVDWSKRLGLNWGGALSLGNWSAVTAGDLSVAAGSSIGFGFLSNTLSLDGLFTAMENEGNGRVVSRPTLLTLDRQSASVLRGTELPYQQSAGDGATSVAFKHAALSLEVKPVISPDNSIVIEVLVSRDSPNFSNAIDGVPPIDTNRLVTTIRVPHGQTVVLGGVYSTINQQGSSRVSGISRIPGIGRLFKKKEHVTEQYELLIFLTPRILGLEVEPEKQSLVFDESFFLGDLF.

The signal sequence occupies residues 1–20 (MIRSIIALMLSFALVPFAFA). The helical transmembrane segment at 226–245 (LSVAAGSSIGFGFLSNTLSL) threads the bilayer.

Its subcellular location is the host membrane. In terms of biological role, may play a role in phage assembly. The chain is Putative assembly protein ORF430 from Pseudomonas aeruginosa (Bacteriophage Pf3).